We begin with the raw amino-acid sequence, 339 residues long: Glycerol-3-phosphate dehydrogenase [NAD(P)+] (339 aa).

Ser15, Tyr16, His36, and Lys110 together coordinate NADPH. 3 residues coordinate sn-glycerol 3-phosphate: Lys110, Gly139, and Thr141. Ala143 provides a ligand contact to NADPH. Residues Lys195, Asp248, Ser258, Arg259, and Asn260 each contribute to the sn-glycerol 3-phosphate site. The active-site Proton acceptor is Lys195. Arg259 contacts NADPH. NADPH contacts are provided by Val283 and Glu285.

This sequence belongs to the NAD-dependent glycerol-3-phosphate dehydrogenase family.

Its subcellular location is the cytoplasm. It carries out the reaction sn-glycerol 3-phosphate + NAD(+) = dihydroxyacetone phosphate + NADH + H(+). The enzyme catalyses sn-glycerol 3-phosphate + NADP(+) = dihydroxyacetone phosphate + NADPH + H(+). The protein operates within membrane lipid metabolism; glycerophospholipid metabolism. Catalyzes the reduction of the glycolytic intermediate dihydroxyacetone phosphate (DHAP) to sn-glycerol 3-phosphate (G3P), the key precursor for phospholipid synthesis. This is Glycerol-3-phosphate dehydrogenase [NAD(P)+] from Enterobacter sp. (strain 638).